The sequence spans 144 residues: MATKSCPQCDQQVPVACKSCPCGYIFISRKLLHAKQSQRLPPTSENRSDPKRRRTERIKRERIHTAVNRDLENRKRSRSNSQSEASRRGRGRPKTATTKKHEEEKEKQEKEVDMYANLSDEKAFVFSVALAEINRKIINQRLIL.

Residues 33 to 112 (HAKQSQRLPP…EEKEKQEKEV (80 aa)) are disordered. A compositionally biased stretch (polar residues) spans 35-45 (KQSQRLPPTSE). Basic residues predominate over residues 50–62 (PKRRRTERIKRER). Basic and acidic residues-rich tracts occupy residues 63–74 (IHTAVNRDLENR) and 99–112 (KKHEEEKEKQEKEV). Positions 94 to 122 (KTATTKKHEEEKEKQEKEVDMYANLSDEK) form a coiled coil.

Belongs to the UPF0547 family.

The polypeptide is UPF0547 protein C16orf87 homolog (Xenopus laevis (African clawed frog)).